The chain runs to 236 residues: Phosphoribosylaminoimidazole-succinocarboxamide synthase (236 aa).

Belongs to the SAICAR synthetase family.

The enzyme catalyses 5-amino-1-(5-phospho-D-ribosyl)imidazole-4-carboxylate + L-aspartate + ATP = (2S)-2-[5-amino-1-(5-phospho-beta-D-ribosyl)imidazole-4-carboxamido]succinate + ADP + phosphate + 2 H(+). It functions in the pathway purine metabolism; IMP biosynthesis via de novo pathway; 5-amino-1-(5-phospho-D-ribosyl)imidazole-4-carboxamide from 5-amino-1-(5-phospho-D-ribosyl)imidazole-4-carboxylate: step 1/2. The polypeptide is Phosphoribosylaminoimidazole-succinocarboxamide synthase (Pseudomonas syringae pv. tomato (strain ATCC BAA-871 / DC3000)).